Consider the following 210-residue polypeptide: Large ribosomal subunit protein uL3 (210 aa).

Residues 133–156 (ASHGNSLSHRVPGSIGQNQTPGKV) are disordered. At Q151 the chain carries N5-methylglutamine.

Belongs to the universal ribosomal protein uL3 family. In terms of assembly, part of the 50S ribosomal subunit. Forms a cluster with proteins L14 and L19. Post-translationally, methylated by PrmB.

Functionally, one of the primary rRNA binding proteins, it binds directly near the 3'-end of the 23S rRNA, where it nucleates assembly of the 50S subunit. The protein is Large ribosomal subunit protein uL3 of Hamiltonella defensa subsp. Acyrthosiphon pisum (strain 5AT).